We begin with the raw amino-acid sequence, 349 residues long: tRNA pseudouridine synthase D (349 aa).

F26 serves as a coordination point for substrate. D79 (nucleophile) is an active-site residue. Residue N128 coordinates substrate. Residues 154–302 (GVPNYFGSQR…VEGSRRAVLL (149 aa)) enclose the TRUD domain. F328 contributes to the substrate binding site.

This sequence belongs to the pseudouridine synthase TruD family.

The enzyme catalyses uridine(13) in tRNA = pseudouridine(13) in tRNA. In terms of biological role, responsible for synthesis of pseudouridine from uracil-13 in transfer RNAs. The sequence is that of tRNA pseudouridine synthase D from Yersinia pseudotuberculosis serotype O:1b (strain IP 31758).